A 452-amino-acid chain; its full sequence is Diphthine methyltransferase (452 aa).

7 WD repeats span residues 79–130 (PLVE…SHVL), 131–185 (EPLS…RPRL), 186–229 (QKVA…RVPG), 230–273 (KFLF…RNMK), 274–313 (QPLA…LNCQ), 314–403 (KAME…TEGM), and 404–448 (RKNG…HLWE). Ser-353 is modified (phosphoserine). Residues 371–402 (SELPTPCHECREDNDGEGHARPQSGMKPLTEG) form a disordered region. The span at 378-390 (HECREDNDGEGHA) shows a compositional bias: basic and acidic residues.

Belongs to the DPH7 family. As to quaternary structure, interacts with INCA1.

It catalyses the reaction diphthine methyl ester-[translation elongation factor 2] + H2O = diphthine-[translation elongation factor 2] + methanol + H(+). The protein operates within protein modification; peptidyl-diphthamide biosynthesis. Functionally, catalyzes the demethylation of diphthine methyl ester to form diphthine, an intermediate diphthamide biosynthesis, a post-translational modification of histidine which occurs in translation elongation factor 2 (EEF2) which can be ADP-ribosylated by diphtheria toxin and by Pseudomonas exotoxin A (Eta). The sequence is that of Diphthine methyltransferase (DPH7) from Homo sapiens (Human).